The following is a 141-amino-acid chain: HTH-type transcriptional repressor NsrR (141 aa).

Residues 2–129 (QLTSFTDYGL…DNYTLADLVE (128 aa)) enclose the HTH rrf2-type domain. Positions 28–51 (ISEVTDVYGVSRNHMVKIINQLSR) form a DNA-binding region, H-T-H motif. 3 residues coordinate [2Fe-2S] cluster: C91, C96, and C102.

[2Fe-2S] cluster serves as cofactor.

Nitric oxide-sensitive repressor of genes involved in protecting the cell against nitrosative stress. May require iron for activity. The chain is HTH-type transcriptional repressor NsrR from Escherichia coli O139:H28 (strain E24377A / ETEC).